Here is a 735-residue protein sequence, read N- to C-terminus: Exocyst complex component 7 (735 aa).

Coiled coils occupy residues Q5 to M42 and V63 to D85. S133 carries the phosphoserine modification. The interval H239–R268 is disordered.

The protein belongs to the EXO70 family. As to quaternary structure, the exocyst complex is composed of EXOC1, EXOC2, EXOC3, EXOC4, EXOC5, EXOC6, EXOC7 and EXOC8. Interacts with ARHQ in a GTP-dependent manner. Interacts with RAB11FIP3. In terms of tissue distribution, abundant in the ventricular zone, the outer subventricular zone and the cortical plate of the fetal cortex.

It localises to the cytoplasm. The protein localises to the cytosol. It is found in the cell membrane. The protein resides in the midbody. Its subcellular location is the midbody ring. Its function is as follows. Component of the exocyst complex involved in the docking of exocytic vesicles with fusion sites on the plasma membrane. In adipocytes, plays a crucial role in targeting SLC2A4 vesicle to the plasma membrane in response to insulin, perhaps directing the vesicle to the precise site of fusion. It is required for neuron survival and plays an essential role in cortical development. The protein is Exocyst complex component 7 (EXOC7) of Homo sapiens (Human).